Reading from the N-terminus, the 256-residue chain is Thiazole synthase (256 aa).

The active-site Schiff-base intermediate with DXP is the lysine 95. Residues glycine 156, 182–183, and 204–205 each bind 1-deoxy-D-xylulose 5-phosphate; these read AG and NT.

It belongs to the ThiG family. As to quaternary structure, homotetramer. Forms heterodimers with either ThiH or ThiS.

The protein resides in the cytoplasm. The enzyme catalyses [ThiS sulfur-carrier protein]-C-terminal-Gly-aminoethanethioate + 2-iminoacetate + 1-deoxy-D-xylulose 5-phosphate = [ThiS sulfur-carrier protein]-C-terminal Gly-Gly + 2-[(2R,5Z)-2-carboxy-4-methylthiazol-5(2H)-ylidene]ethyl phosphate + 2 H2O + H(+). It functions in the pathway cofactor biosynthesis; thiamine diphosphate biosynthesis. Functionally, catalyzes the rearrangement of 1-deoxy-D-xylulose 5-phosphate (DXP) to produce the thiazole phosphate moiety of thiamine. Sulfur is provided by the thiocarboxylate moiety of the carrier protein ThiS. In vitro, sulfur can be provided by H(2)S. The polypeptide is Thiazole synthase (Escherichia coli (strain 55989 / EAEC)).